The chain runs to 156 residues: Small ribosomal subunit protein uS7c (156 aa).

The protein belongs to the universal ribosomal protein uS7 family. As to quaternary structure, part of the 30S ribosomal subunit.

It localises to the plastid. Its subcellular location is the chloroplast. Functionally, one of the primary rRNA binding proteins, it binds directly to 16S rRNA where it nucleates assembly of the head domain of the 30S subunit. The protein is Small ribosomal subunit protein uS7c (rps7) of Pyropia yezoensis (Susabi-nori).